A 219-amino-acid polypeptide reads, in one-letter code: Claudin-20 (219 aa).

The Cytoplasmic segment spans residues M1 to Q7. A helical transmembrane segment spans residues L8 to P28. The Extracellular segment spans residues N29–R81. A helical transmembrane segment spans residues A82–M102. Residues K103–S118 are Cytoplasmic-facing. The chain crosses the membrane as a helical span at residues F119–Y139. The Extracellular portion of the chain corresponds to T140–P160. A helical transmembrane segment spans residues G161–F181. At C182–V219 the chain is on the cytoplasmic side. Residues R193 to V219 are disordered. Polar residues predominate over residues Q200–H213.

The protein belongs to the claudin family.

Its subcellular location is the cell junction. The protein resides in the tight junction. It localises to the cell membrane. In terms of biological role, plays a major role in tight junction-specific obliteration of the intercellular space, through calcium-independent cell-adhesion activity. This Homo sapiens (Human) protein is Claudin-20 (CLDN20).